The chain runs to 1038 residues: Ubiquitin carboxyl-terminal hydrolase 36 (1038 aa).

Disordered regions lie at residues leucine 22–serine 44 and alanine 107–lysine 148. Polar residues predominate over residues glycine 23 to serine 44. Positions threonine 172–aspartate 480 constitute a USP domain. The active-site Nucleophile is the cysteine 181. The active-site Proton acceptor is the histidine 439. Disordered regions lie at residues proline 487–glycine 794, glycine 818–serine 881, leucine 912–asparagine 985, and arginine 1000–threonine 1038. Low complexity-rich tracts occupy residues serine 502–threonine 517, glutamine 546–glycine 559, and asparagine 587–asparagine 606. Phosphoserine occurs at positions 513 and 515. The span at threonine 629 to glutamate 641 shows a compositional bias: polar residues. Threonine 658 and threonine 662 each carry phosphothreonine. Residues serine 672 and serine 674 each carry the phosphoserine modification. Polar residues predominate over residues threonine 703 to lysine 728. A compositionally biased stretch (basic and acidic residues) spans glutamine 729–aspartate 746. Serine 747 carries the phosphoserine modification. Positions serine 747–proline 756 are enriched in acidic residues. Residues proline 766–alanine 776 are compositionally biased toward low complexity. Positions proline 777–proline 786 are enriched in pro residues. Residue serine 779 is modified to Phosphoserine. Threonine 782 carries the post-translational modification Phosphothreonine. A phosphoserine mark is found at serine 785 and serine 819. A Phosphothreonine modification is found at threonine 825. The span at asparagine 832–proline 844 shows a compositional bias: polar residues. Phosphoserine is present on serine 843. Threonine 846 is modified (phosphothreonine). Polar residues predominate over residues alanine 859–serine 881. Over residues leucine 912–aspartate 923 the composition is skewed to basic and acidic residues. A compositionally biased stretch (low complexity) spans serine 942 to serine 953.

This sequence belongs to the peptidase C19 family. Interacts with atms/PAF1, but not with CycT. Interacts (via C-terminus) with imd (via N-terminus).

The protein resides in the nucleus. The protein localises to the nucleolus. It localises to the cytoplasm. The catalysed reaction is Thiol-dependent hydrolysis of ester, thioester, amide, peptide and isopeptide bonds formed by the C-terminal Gly of ubiquitin (a 76-residue protein attached to proteins as an intracellular targeting signal).. Hydrolase that deubiquitinates polyubiquitinated target proteins including imd. Required for preventing the constitutive activation of the imd/NF-kappa-B (Imd) signaling cascade under unchalleneged conditions. Deubiquitinates imd linked 'Lys-63' chains which leads its proteasomal degradation and consequently down-regulation of the Imd signaling cascade. Removal of the activating 'Lys-63'-linked chains is likely to enable their replacement with 'Lys-48'-linked chains which act as 'tags' the for proteasomal degradation of imd. Required for maintaining multiple types of adult stem cells, including male and female germline, epithelial follicle cell and intestinal stem cells. May function as a transcriptional repressor by continually deubiquiting histone H2B at the promoters of genes critical for cellular differentiation, thereby preventing histone H3 'Lys-4' trimethylation (H3K4me3). Controls selective autophagy activation by ubiquitinated proteins. The sequence is that of Ubiquitin carboxyl-terminal hydrolase 36 (scny) from Drosophila melanogaster (Fruit fly).